The sequence spans 549 residues: Glucose-6-phosphate isomerase (549 aa).

The Proton donor role is filled by Glu-355. Residues His-387 and Lys-515 contribute to the active site.

The protein belongs to the GPI family.

It localises to the cytoplasm. The catalysed reaction is alpha-D-glucose 6-phosphate = beta-D-fructose 6-phosphate. It participates in carbohydrate biosynthesis; gluconeogenesis. Its pathway is carbohydrate degradation; glycolysis; D-glyceraldehyde 3-phosphate and glycerone phosphate from D-glucose: step 2/4. In terms of biological role, catalyzes the reversible isomerization of glucose-6-phosphate to fructose-6-phosphate. This is Glucose-6-phosphate isomerase from Haemophilus influenzae (strain PittEE).